The following is a 243-amino-acid chain: DNA repair protein RecO (243 aa).

This sequence belongs to the RecO family.

In terms of biological role, involved in DNA repair and RecF pathway recombination. The chain is DNA repair protein RecO from Xylella fastidiosa (strain M12).